Here is a 2742-residue protein sequence, read N- to C-terminus: Polycystin-1-like protein 1 (2742 aa).

Residues 1-1602 (MFCLWIFSLA…LDQFLSVSRD (1602 aa)) are Extracellular-facing. Residues N35, N133, N149, N220, and N267 are each glycosylated (N-linked (GlcNAc...) asparagine). 2 consecutive PKD domains span residues 286-372 (AVRI…VKLN) and 370-454 (KLNR…PCQP). N-linked (GlcNAc...) asparagine glycosylation is found at N383, N397, N486, N545, N693, N709, and N735. Positions 452–1338 (CQPPPVKNLG…ITFFLPASLI (887 aa)) constitute an REJ domain. Disordered stretches follow at residues 767–829 (SPSR…QSDP) and 846–908 (DLRG…RPSV). The span at 779–799 (SELTDSPVSSVTVGFSGSESF) shows a compositional bias: polar residues. Low complexity predominate over residues 880–893 (SFPSDSDSFSHSSS). Residues N1080, N1101, N1201, N1318, N1437, N1490, and N1568 are each glycosylated (N-linked (GlcNAc...) asparagine). Residues 1436-1587 (HNFSITQEHL…KVLQQQIQSS (152 aa)) enclose the GAIN-B domain. 2 disulfide bridges follow: C1541–C1569 and C1556–C1571. Residues 1541-1587 (CLSWEDQQGSWTQNGCRAQTNDKTSAVNCSCHHLKPLKVLQQQIQSS) form a GPS region. A helical membrane pass occupies residues 1603-1623 (LTVVFVLLLCVSLNIPVLVWC). Topologically, residues 1624-1812 (KKTDATSEEN…SPHLFTRAQR (189 aa)) are cytoplasmic. Residues 1648 to 1769 (HFYAVTVHTG…GDGQVERMLR (122 aa)) enclose the PLAT domain. Residues 1813–1833 (LCVCLLLFLGYACVNIIITHQ) form a helical membrane-spanning segment. The Extracellular segment spans residues 1834–1851 (RDDQLPFDLGVIDVTSVS). A helical transmembrane segment spans residues 1852–1872 (IATGLVSVVAVLPVAMVISFL). At 1873–2005 (FRVKSGRMTL…YRLASLLYHC (133 aa)) the chain is on the cytoplasmic side. A helical membrane pass occupies residues 2006-2026 (VAWTLCLLFCLSCLILSAVLG). Topologically, residues 2027–2040 (TRLNSGKILHWIHS) are extracellular. The helical transmembrane segment at 2041–2061 (LFVSLTFCFFVIHPATILVLA) threads the bilayer. Residues 2062-2151 (AVVSWRFKRS…KQAVIHKMLR (90 aa)) are Cytoplasmic-facing. Residues 2152–2172 (DLCLCGSMFFLMVCITYGSPV) form a helical membrane-spanning segment. At 2173 to 2344 (DEHYPLNAAF…QSVRLYHSPS (172 aa)) the chain is on the extracellular side. N-linked (GlcNAc...) asparagine glycosylation is present at N2218. The chain crosses the membrane as a helical span at residues 2345-2365 (MLDYTVMVWQLLFLLLSLVNL). Residues 2366–2378 (YHQTSTAAQHGLM) are Cytoplasmic-facing. A helical membrane pass occupies residues 2379–2401 (GYWKTTSISVEVSLVIVSLVYYV). At 2402–2442 (HYVYHPTMVMEVAEQLRRNHREHVDVSTLANSEQFSRTLRG) the chain is on the extracellular side. Residues 2443-2463 (IILFLLAVKCVTVVRLNRILA) form a helical membrane-spanning segment. The Cytoplasmic portion of the chain corresponds to 2464–2467 (PSMP). The helical transmembrane segment at 2468–2488 (LLSLSSLLWPAISGLLLLSIF) threads the bilayer. At 2489 to 2528 (SCMGRLLYIERTFHSIQTVLWHFWSLRKSRDLISLWRDFY) the chain is on the extracellular side. Residues 2529–2549 (YFGLLYASSAMLTTMVFAVMI) form a helical membrane-spanning segment. At 2550-2742 (RKAKRSPSTK…LVHHEQGTKN (193 aa)) the chain is on the cytoplasmic side.

It belongs to the polycystin family. Heterodimer. Interacts with pkd2 to form a calcium channel. Interacts with pkd2l1 to form ciliary calcium channel. In terms of tissue distribution, expressed in Kupffer's vesicle, an organ equivalent to the node.

Its subcellular location is the cell projection. The protein localises to the cilium membrane. Component of a calcium-permeant ion channel formed by PKD1L2 and PKD1L1 in primary cilia, where it controls cilium calcium concentration, without affecting cytoplasmic calcium concentration, and regulates sonic hedgehog/SHH signaling and GLI2 transcription. The PKD1L1:PKD2L1 channel complex is mechanosensitive only at high pressures and is highly temperature sensitive. Also involved in left/right axis specification downstream of nodal flow by forming a complex with PKD2 in cilia to facilitate flow detection in left/right patterning. The chain is Polycystin-1-like protein 1 from Oryzias latipes (Japanese rice fish).